A 332-amino-acid polypeptide reads, in one-letter code: Ribosomal RNA small subunit methyltransferase H (332 aa).

Residues 34–36 (GGH), Asp-59, Phe-86, Asp-112, and Gln-119 contribute to the S-adenosyl-L-methionine site.

Belongs to the methyltransferase superfamily. RsmH family.

The protein localises to the cytoplasm. The catalysed reaction is cytidine(1402) in 16S rRNA + S-adenosyl-L-methionine = N(4)-methylcytidine(1402) in 16S rRNA + S-adenosyl-L-homocysteine + H(+). In terms of biological role, specifically methylates the N4 position of cytidine in position 1402 (C1402) of 16S rRNA. The chain is Ribosomal RNA small subunit methyltransferase H from Chlorobium phaeobacteroides (strain BS1).